The primary structure comprises 153 residues: ORM1-like protein 1 (153 aa).

At 1–26 the chain is on the cytoplasmic side; it reads MNVGVAHSEVNPNTRVMNSRGMWLTY. A run of 2 helical transmembrane segments spans residues 27 to 46 and 47 to 67; these read ALGVGMLHIVLLSIPFFSVP and VAWTLTNVIHNLGMYVFLHAV. Residues 68 to 100 lie on the Cytoplasmic side of the membrane; sequence KGTPFETPDQGKARLLTHWEQLDYGVQFTSSRK. A helical transmembrane segment spans residues 101 to 121; it reads FLTISPIILYFLASFYTKYDP. At 122 to 123 the chain is on the extracellular side; sequence TH. The helical transmembrane segment at 124-144 threads the bilayer; the sequence is FFINTASLLSVLIPKLPQLHG. Residues 145–153 are Cytoplasmic-facing; that stretch reads VRIFGINKY.

This sequence belongs to the ORM family. In terms of assembly, ceramide-sensitive subunit of the serine palmitoyltransferase (SPT) complex, which is also composed of SPTLC1, SPTLC2/3 and SPTSSA/B.

It localises to the endoplasmic reticulum membrane. Functionally, plays an essential role in the homeostatic regulation of sphingolipid de novo biosynthesis by modulating the activity of the serine palmitoyltransferase (SPT) in response to ceramide levels. When complexed to SPT, the binding of ceramides to its N-terminus stabilizes a conformation that block SPT substrate entry, hence preventing SPT catalytic activity. Through this mechanism, maintains ceramide levels at sufficient concentrations for the production of complex sphingolipids, but which prevents the accumulation of ceramides to levels that trigger apoptosis. In Xenopus laevis (African clawed frog), this protein is ORM1-like protein 1 (ormdl1).